The following is a 373-amino-acid chain: Decapping nuclease RAI1 (373 aa).

E136 serves as a coordination point for a divalent metal cation. Substrate-binding residues include C168 and E185. A divalent metal cation-binding residues include D187, E205, and L206. Substrate-binding residues include K207 and Q231. A disordered region spans residues 340-373; sequence KDKPPGFEPSDAADAEPSMAEEPVPETASASGAY.

Belongs to the DXO/Dom3Z family. As to quaternary structure, interacts with RAT1; the interaction is direct, stabilizes RAT1 protein structure and stimulates its exoribonuclease activity. The interaction also stimulates RAI1 pyrophosphohydrolase activity, probably by recruiting it to mRNA substrates. It depends on a divalent metal cation as a cofactor.

Its subcellular location is the nucleus. It catalyses the reaction a 5'-end NAD(+)-phospho-ribonucleoside in mRNA + H2O = a 5'-end phospho-ribonucleoside in mRNA + NAD(+) + H(+). The catalysed reaction is a 5'-end (N(7)-methyl 5'-triphosphoguanosine)-ribonucleoside-ribonucleotide in mRNA + H2O = a (N(7)-methyl 5'-triphosphoguanosine)-nucleoside + a 5'-end phospho-ribonucleoside in mRNA + H(+). The enzyme catalyses a 5'-end triphospho-ribonucleoside in mRNA + H2O = a 5'-end phospho-ribonucleoside in mRNA + diphosphate + H(+). Functionally, decapping enzyme for NAD-capped RNAs: specifically hydrolyzes the nicotinamide adenine dinucleotide (NAD) cap from a subset of RNAs by removing the entire NAD moiety from the 5'-end of an NAD-capped RNA. The NAD-cap is present at the 5'-end of some RNAs and snoRNAs. In contrast to the canonical 5'-end N7 methylguanosine (m7G) cap, the NAD cap promotes mRNA decay. Also acts as a non-canonical decapping enzyme that removes the entire cap structure of m7G capped or incompletely capped RNAs. Has decapping activity toward incomplete 5'-end m7G cap mRNAs such as unmethylated 5'-end-capped RNA (cap0), while it has no activity toward 2'-O-ribose methylated m7G cap (cap1). Also possesses RNA 5'-pyrophosphohydrolase activity by hydrolyzing the 5'-end triphosphate to release pyrophosphates. Stimulates exoribonuclease activity of Rat1, allowing it to degrade RNAs with stable secondary structure more effectively. This chain is Decapping nuclease RAI1 (RAI1), found in Chaetomium globosum (strain ATCC 6205 / CBS 148.51 / DSM 1962 / NBRC 6347 / NRRL 1970) (Soil fungus).